Consider the following 149-residue polypeptide: Calmodulin (149 aa).

The residue at position 2 (Ala-2) is an N-acetylalanine. EF-hand domains follow at residues Glu-8 to Asn-43, Pro-44 to Asp-79, Asp-81 to Lys-116, and Leu-117 to Lys-149. The Ca(2+) site is built by Asp-21, Asp-23, Asp-25, Thr-27, Glu-32, Asp-57, Asp-59, Asn-61, Thr-63, Glu-68, Asp-94, Asp-96, Asn-98, and Glu-105. The residue at position 116 (Lys-116) is an N6,N6,N6-trimethyllysine. Ca(2+)-binding residues include Asp-130, Asp-132, Asp-134, Gln-136, and Glu-141.

The protein belongs to the calmodulin family.

In terms of biological role, calmodulin mediates the control of a large number of enzymes, ion channels and other proteins by Ca(2+). Among the enzymes to be stimulated by the calmodulin-Ca(2+) complex are a number of protein kinases and phosphatases. This Karlodinium veneficum (Dinoflagellate) protein is Calmodulin.